The sequence spans 1906 residues: Serine protease/ABC transporter B family protein tagB (1906 aa).

Residues 1 to 31 (MKFQFSSPSKIFLFSSVILILIFIGIKFELL) form the signal peptide. A disordered region spans residues 96–134 (INNNNNNNNKLNNNNNNNNNNNNNNNNNNNNNNNNNNNN). Positions 356-763 (PTVIFGTKDK…ASSTNPSNAI (408 aa)) constitute a Peptidase S8 domain. Catalysis depends on charge relay system residues Asp387 and His432. N-linked (GlcNAc...) asparagine glycans are attached at residues Asn594, Asn621, and Asn672. Ser695 serves as the catalytic Charge relay system. Residues Asn747 and Asn823 are each glycosylated (N-linked (GlcNAc...) asparagine). Transmembrane regions (helical) follow at residues 1011–1031 (YIIIIVAGGTMVLIILLLMWI), 1076–1096 (FIIELTIATACSLVATAASIL), and 1121–1141 (FIIIFILAFIEFLFTNVGSWI). The region spanning 1080-1363 (LTIATACSLV…LFGVYVSYIQ (284 aa)) is the ABC transmembrane type-1 domain. An N-linked (GlcNAc...) asparagine glycan is attached at Asn1172. A run of 3 helical transmembrane segments spans residues 1210–1230 (LVFIFTISWKLSLAFFAAVPI), 1309–1329 (WLLIESLTFVILYFSAYLVIQ), and 1332–1352 (FTVGLMISFSLYIGYVVDASS). Residues 1385–1455 (LEEEEADRLA…NNNNNIGNLD (71 aa)) form a disordered region. Residues 1396–1405 (LSGGGGGGGD) are compositionally biased toward gly residues. Residues 1407 to 1420 (GDDKKDKQNIENGK) show a composition bias toward basic and acidic residues. The 239-residue stretch at 1518-1756 (IEFKNVSFRY…KGKYYRMFSE (239 aa)) folds into the ABC transporter domain. An N-linked (GlcNAc...) asparagine glycan is attached at Asn1522. Position 1553 to 1560 (1553 to 1560 (GPSGSGKS)) interacts with ATP. A glycan (N-linked (GlcNAc...) asparagine) is linked at Asn1658. A disordered region spans residues 1757–1906 (DKDDTPLQNN…QMDEENDEER (150 aa)). 2 stretches are compositionally biased toward low complexity: residues 1765–1779 (NNNNNKNNNNNNNNN) and 1814–1871 (EQQE…DYDQ). The span at 1872 to 1886 (VPPPPPLPSESPSPP) shows a compositional bias: pro residues.

It in the C-terminal section; belongs to the ABC transporter superfamily. ABCB family. Multidrug resistance exporter (TC 3.A.1.201) subfamily. The protein in the N-terminal section; belongs to the peptidase S8 family.

Its subcellular location is the membrane. Intercellular communication via tagB may mediate integration of cellular differentiation with morphogenesis. The chain is Serine protease/ABC transporter B family protein tagB (tagB) from Dictyostelium discoideum (Social amoeba).